A 469-amino-acid polypeptide reads, in one-letter code: ATP synthase subunit beta (469 aa).

Glycine 155–threonine 162 contacts ATP.

It belongs to the ATPase alpha/beta chains family. F-type ATPases have 2 components, CF(1) - the catalytic core - and CF(0) - the membrane proton channel. CF(1) has five subunits: alpha(3), beta(3), gamma(1), delta(1), epsilon(1). CF(0) has three main subunits: a(1), b(2) and c(9-12). The alpha and beta chains form an alternating ring which encloses part of the gamma chain. CF(1) is attached to CF(0) by a central stalk formed by the gamma and epsilon chains, while a peripheral stalk is formed by the delta and b chains.

The protein localises to the cell inner membrane. The enzyme catalyses ATP + H2O + 4 H(+)(in) = ADP + phosphate + 5 H(+)(out). Produces ATP from ADP in the presence of a proton gradient across the membrane. The catalytic sites are hosted primarily by the beta subunits. This chain is ATP synthase subunit beta, found in Syntrophobacter fumaroxidans (strain DSM 10017 / MPOB).